The chain runs to 476 residues: Replication factor C large subunit (476 aa).

43 to 50 lines the ATP pocket; sequence GKPGIGKT. Residues 435–476 are disordered; sequence LEALRMQEPPVPETPPAAEEQPLEEPQEEKKLAPKQATLDFF.

Belongs to the activator 1 small subunits family. RfcL subfamily. As to quaternary structure, heteromultimer composed of small subunits (RfcS) and large subunits (RfcL).

In terms of biological role, part of the RFC clamp loader complex which loads the PCNA sliding clamp onto DNA. In Methanocorpusculum labreanum (strain ATCC 43576 / DSM 4855 / Z), this protein is Replication factor C large subunit.